A 387-amino-acid chain; its full sequence is Dual-specificity RNA methyltransferase RlmN (387 aa).

Glu-93 acts as the Proton acceptor in catalysis. The Radical SAM core domain maps to 99–343 (EENRGTLCIS…TTVRKTRGDD (245 aa)). Cysteines 106 and 348 form a disulfide. Positions 113, 117, and 120 each coordinate [4Fe-4S] cluster. S-adenosyl-L-methionine-binding positions include 172 to 173 (GE), Ser-204, 226 to 228 (SLH), and Asn-305. Cys-348 acts as the S-methylcysteine intermediate in catalysis.

The protein belongs to the radical SAM superfamily. RlmN family. [4Fe-4S] cluster is required as a cofactor.

It is found in the cytoplasm. It catalyses the reaction adenosine(2503) in 23S rRNA + 2 reduced [2Fe-2S]-[ferredoxin] + 2 S-adenosyl-L-methionine = 2-methyladenosine(2503) in 23S rRNA + 5'-deoxyadenosine + L-methionine + 2 oxidized [2Fe-2S]-[ferredoxin] + S-adenosyl-L-homocysteine. The catalysed reaction is adenosine(37) in tRNA + 2 reduced [2Fe-2S]-[ferredoxin] + 2 S-adenosyl-L-methionine = 2-methyladenosine(37) in tRNA + 5'-deoxyadenosine + L-methionine + 2 oxidized [2Fe-2S]-[ferredoxin] + S-adenosyl-L-homocysteine. Functionally, specifically methylates position 2 of adenine 2503 in 23S rRNA and position 2 of adenine 37 in tRNAs. m2A2503 modification seems to play a crucial role in the proofreading step occurring at the peptidyl transferase center and thus would serve to optimize ribosomal fidelity. This Janthinobacterium sp. (strain Marseille) (Minibacterium massiliensis) protein is Dual-specificity RNA methyltransferase RlmN.